Here is a 561-residue protein sequence, read N- to C-terminus: Putative transport protein YbjL (561 aa).

The next 5 helical transmembrane spans lie at L8–G28, L32–Q52, F66–F86, M94–F114, and N158–A178. 2 consecutive RCK C-terminal domains span residues R200–N288 and V292–F373. Transmembrane regions (helical) follow at residues L383–F403, F406–L426, F447–G467, M475–A495, and A540–L560.

It belongs to the AAE transporter (TC 2.A.81) family. YbjL subfamily.

Its subcellular location is the cell membrane. The sequence is that of Putative transport protein YbjL from Salmonella arizonae (strain ATCC BAA-731 / CDC346-86 / RSK2980).